The primary structure comprises 157 residues: Ribosome maturation factor RimP (157 aa).

Belongs to the RimP family.

It localises to the cytoplasm. Functionally, required for maturation of 30S ribosomal subunits. This is Ribosome maturation factor RimP from Thermosynechococcus vestitus (strain NIES-2133 / IAM M-273 / BP-1).